We begin with the raw amino-acid sequence, 334 residues long: Protein POLAR-like 1 (334 aa).

Positions 53–63 (IRTSSEDDHHR) are enriched in basic and acidic residues. Positions 53–74 (IRTSSEDDHHRVGQFSDSPPPT) are disordered. Residues 273-300 (ETRQQEEIKELEIALDDAKQRLHLKETE) adopt a coiled-coil conformation.

Its subcellular location is the cytoplasm. The protein localises to the cell cortex. Its function is as follows. Acts as a stomatal lineage scaffold which regulates subcellular localization and transient polarization of kinases (e.g. ASK7/BIN2 and ASK3/SK12) involved in asymmetric cell division (ACD) in a BASL-dependent manner. This chain is Protein POLAR-like 1, found in Arabidopsis thaliana (Mouse-ear cress).